Consider the following 497-residue polypeptide: Aldehyde dehydrogenase (497 aa).

241–246 (GSTVVG) lines the NAD(+) pocket. Residue glutamate 264 is the Proton acceptor of the active site. Cysteine 298 functions as the Nucleophile in the catalytic mechanism.

Belongs to the aldehyde dehydrogenase family.

Its subcellular location is the cytoplasm. The enzyme catalyses an aldehyde + NAD(+) + H2O = a carboxylate + NADH + 2 H(+). It functions in the pathway alcohol metabolism; ethanol degradation; acetate from ethanol: step 2/2. This chain is Aldehyde dehydrogenase (ALTA10), found in Alternaria alternata (Alternaria rot fungus).